Reading from the N-terminus, the 216-residue chain is Pyrrolidone-carboxylate peptidase (216 aa).

Active-site residues include glutamate 80, cysteine 143, and histidine 167.

Belongs to the peptidase C15 family. Homotetramer.

Its subcellular location is the cytoplasm. The enzyme catalyses Release of an N-terminal pyroglutamyl group from a polypeptide, the second amino acid generally not being Pro.. In terms of biological role, removes 5-oxoproline from various penultimate amino acid residues except L-proline. The polypeptide is Pyrrolidone-carboxylate peptidase (pcp) (Streptomyces coelicolor (strain ATCC BAA-471 / A3(2) / M145)).